A 139-amino-acid polypeptide reads, in one-letter code: Myosin light chain kinase, smooth muscle (139 aa).

Residues 48-97 (APTGENAKAPEMKARRPKSSLPPVLGTESDATVKKKPAPKTPPKAAMPPQ) form a disordered region.

This sequence belongs to the protein kinase superfamily. CAMK Ser/Thr protein kinase family. As to quaternary structure, interacts with SVIL. The C-terminus is deglutamylated by AGTPBP1/CCP1, AGBL1/CCP4 and AGBL4/CCP6, leading to the formation of Myosin light chain kinase, smooth muscle, deglutamylated form. The consequences of C-terminal deglutamylation are unknown.

It catalyses the reaction L-seryl-[myosin light chain] + ATP = O-phospho-L-seryl-[myosin light chain] + ADP + H(+). The catalysed reaction is L-threonyl-[myosin light chain] + ATP = O-phospho-L-threonyl-[myosin light chain] + ADP + H(+). Its function is as follows. Phosphorylates a specific serine in the N-terminus of a myosin light chain. Also regulates actin-myosin interaction through a non-kinase activity. The sequence is that of Myosin light chain kinase, smooth muscle (MYLK) from Sus scrofa (Pig).